We begin with the raw amino-acid sequence, 371 residues long: Envelope glycoprotein M (371 aa).

The Intravirion portion of the chain corresponds to 1 to 13 (MAPSHVDKVNTRT). Residues 14–34 (WSASIVFMVLTFVNVSVHLVL) form a helical membrane-spanning segment. At 35 to 79 (SNFPHLGYPCVYYHVVDFERLNMSAYNVMHLHTPMLFLDSVQLVC) the chain is on the virion surface side. A helical membrane pass occupies residues 80 to 100 (YAVFMQLVFLAVTIYYLVCWI). Topologically, residues 101-126 (KISMRKDKGMSLNQSTRDISYMGDSL) are intravirion. Residues 127–147 (TAFLFILSMDTFQLFTLTMSF) traverse the membrane as a helical segment. Over 148 to 151 (RLPS) the chain is Virion surface. The chain crosses the membrane as a helical span at residues 152 to 172 (MIAFMAAVHFFCLTIFNVSMV). Over 173-200 (TQYRSYKRSLFFFSRLHPKLKGTVQFRT) the chain is Intravirion. The helical transmembrane segment at 201 to 221 (LIVNLVEVALGFNTTVVAMAL) threads the bilayer. Residues 222 to 239 (CYGFGNNFFVRTGHMVLA) are Virion surface-facing. The helical transmembrane segment at 240–260 (VFVVYAIISIIYFLLIEAVFF) threads the bilayer. At 261-264 (QYVK) the chain is on the intravirion side. The helical transmembrane segment at 265–285 (VQFGYHLGAFFGLCGLIYPIV) threads the bilayer. The Virion surface portion of the chain corresponds to 286–298 (QYDTFLSNEYRTG). Residues 299–319 (ISWSFGMLFFIWAMFTTCRAV) traverse the membrane as a helical segment. At 320–371 (RYFRGRGSGSVKYQALATASGEEVAALSHHDSLESRRLREEEDDDDEDFEDA) the chain is on the intravirion side. Residues 346–371 (LSHHDSLESRRLREEEDDDDEDFEDA) are disordered. Residues 347-359 (SHHDSLESRRLRE) are compositionally biased toward basic and acidic residues. A compositionally biased stretch (acidic residues) spans 360-371 (EEDDDDEDFEDA).

This sequence belongs to the herpesviridae glycoprotein M family. In terms of assembly, interacts (via N-terminus) with gN (via N-terminus). The gM-gN heterodimer forms the gCII complex.

It is found in the virion membrane. It localises to the host Golgi apparatus. The protein localises to the host trans-Golgi network. Its subcellular location is the host endosome membrane. The protein resides in the host nucleus inner membrane. Its function is as follows. Envelope glycoprotein important for virion assembly and egress. Plays a role in the correct incorporation of gH-gL into virion membrane. Directs the glycoprotein N (gN) to the host trans-Golgi network. This is Envelope glycoprotein M from Homo sapiens (Human).